We begin with the raw amino-acid sequence, 353 residues long: 3'-5' exonuclease (353 aa).

Residues 1–119 are disordered; the sequence is MEKYLTKMPI…PSPEKEKPEK (119 aa). Basic and acidic residues-rich tracts occupy residues 13–30 and 37–50; these read KANEVPKEEAGVKKETPK and KKDTPKELKDKENA. The span at 59-70 shows a compositional bias: basic residues; sequence TKGRPGRPAAKR. Residues 71–90 show a composition bias toward basic and acidic residues; it reads KNLDTPDVTEKLAMEEENPP. Phosphoserine occurs at positions 103, 109, and 111. A 3'-5' exonuclease domain is found at 145-313; that stretch reads VLQWVEKQKD…GQVIYRELER (169 aa). Asp-162, Glu-164, and Asp-300 together coordinate Mg(2+).

Belongs to the WRNexo family.

The protein localises to the nucleus. In terms of biological role, has exonuclease activity on both single-stranded and duplex templates bearing overhangs, but not blunt ended duplex DNA, and cleaves in a 3'-5' direction. Essential for the formation of DNA replication focal centers. Has an important role in maintaining genome stability. The polypeptide is 3'-5' exonuclease (Drosophila melanogaster (Fruit fly)).